A 355-amino-acid chain; its full sequence is DNA polymerase IV (355 aa).

Positions 7–188 (IIHIDMDCFY…LPVRKLFGVG (182 aa)) constitute a UmuC domain. D11 and D106 together coordinate Mg(2+). E107 is an active-site residue.

Belongs to the DNA polymerase type-Y family. In terms of assembly, monomer. Requires Mg(2+) as cofactor.

The protein resides in the cytoplasm. It catalyses the reaction DNA(n) + a 2'-deoxyribonucleoside 5'-triphosphate = DNA(n+1) + diphosphate. Functionally, poorly processive, error-prone DNA polymerase involved in untargeted mutagenesis. Copies undamaged DNA at stalled replication forks, which arise in vivo from mismatched or misaligned primer ends. These misaligned primers can be extended by PolIV. Exhibits no 3'-5' exonuclease (proofreading) activity. May be involved in translesional synthesis, in conjunction with the beta clamp from PolIII. The polypeptide is DNA polymerase IV (Legionella pneumophila subsp. pneumophila (strain Philadelphia 1 / ATCC 33152 / DSM 7513)).